We begin with the raw amino-acid sequence, 59 residues long: UPF0181 protein CKO_01169 (59 aa).

It belongs to the UPF0181 family.

The protein is UPF0181 protein CKO_01169 of Citrobacter koseri (strain ATCC BAA-895 / CDC 4225-83 / SGSC4696).